A 161-amino-acid chain; its full sequence is Globin CTT-VIIB-10 (161 aa).

An N-terminal signal peptide occupies residues 1–16 (MKFFAVLALCIVGAIA). In terms of domain architecture, Globin spans 18-161 (PLTADEASLV…NTFAIVVPRL (144 aa)). Heme b-binding residues include H76 and H111.

It belongs to the globin family. In terms of assembly, homodimer.

The protein is Globin CTT-VIIB-10 (CTT-7B10) of Chironomus thummi thummi (Midge).